The following is a 302-amino-acid chain: Oxygen-dependent coproporphyrinogen-III oxidase (302 aa).

S94 is a substrate binding site. A divalent metal cation is bound by residues H98 and H108. The Proton donor role is filled by H108. Residue 110 to 112 coordinates substrate; that stretch reads NVR. The a divalent metal cation site is built by H147 and H177. Residues 242 to 277 are important for dimerization; it reads YVEFNLVYDRGTLFGLQTGGRTESILMSMPPLVRWQ. 260-262 provides a ligand contact to substrate; sequence GGR.

The protein belongs to the aerobic coproporphyrinogen-III oxidase family. As to quaternary structure, homodimer. It depends on a divalent metal cation as a cofactor.

It localises to the cytoplasm. The catalysed reaction is coproporphyrinogen III + O2 + 2 H(+) = protoporphyrinogen IX + 2 CO2 + 2 H2O. The protein operates within porphyrin-containing compound metabolism; protoporphyrin-IX biosynthesis; protoporphyrinogen-IX from coproporphyrinogen-III (O2 route): step 1/1. Involved in the heme biosynthesis. Catalyzes the aerobic oxidative decarboxylation of propionate groups of rings A and B of coproporphyrinogen-III to yield the vinyl groups in protoporphyrinogen-IX. In Shewanella putrefaciens (strain CN-32 / ATCC BAA-453), this protein is Oxygen-dependent coproporphyrinogen-III oxidase.